The sequence spans 92 residues: CRISPR-associated endoribonuclease Cas2 2 (92 aa).

Aspartate 12 contacts Mg(2+).

This sequence belongs to the CRISPR-associated endoribonuclease Cas2 protein family. Homodimer, forms a heterotetramer with a Cas1 homodimer. It depends on Mg(2+) as a cofactor.

Functionally, CRISPR (clustered regularly interspaced short palindromic repeat), is an adaptive immune system that provides protection against mobile genetic elements (viruses, transposable elements and conjugative plasmids). CRISPR clusters contain sequences complementary to antecedent mobile elements and target invading nucleic acids. CRISPR clusters are transcribed and processed into CRISPR RNA (crRNA). Functions as a ssRNA-specific endoribonuclease. Involved in the integration of spacer DNA into the CRISPR cassette. This chain is CRISPR-associated endoribonuclease Cas2 2 (cas22), found in Archaeoglobus fulgidus (strain ATCC 49558 / DSM 4304 / JCM 9628 / NBRC 100126 / VC-16).